Reading from the N-terminus, the 45-residue chain is Photosystem II reaction center protein K (45 aa).

The propeptide occupies methionine 1 to alanine 8. The chain crosses the membrane as a helical span at residues isoleucine 23–glycine 43.

It belongs to the PsbK family. PSII is composed of 1 copy each of membrane proteins PsbA, PsbB, PsbC, PsbD, PsbE, PsbF, PsbH, PsbI, PsbJ, PsbK, PsbL, PsbM, PsbT, PsbX, PsbY, PsbZ, Psb30/Ycf12, at least 3 peripheral proteins of the oxygen-evolving complex and a large number of cofactors. It forms dimeric complexes.

It localises to the plastid. Its subcellular location is the chloroplast thylakoid membrane. Functionally, one of the components of the core complex of photosystem II (PSII). PSII is a light-driven water:plastoquinone oxidoreductase that uses light energy to abstract electrons from H(2)O, generating O(2) and a proton gradient subsequently used for ATP formation. It consists of a core antenna complex that captures photons, and an electron transfer chain that converts photonic excitation into a charge separation. The protein is Photosystem II reaction center protein K of Porphyra purpurea (Red seaweed).